The sequence spans 365 residues: DNA polymerase IV (365 aa).

The UmuC domain occupies isoleucine 7–glycine 188. Residues aspartate 11 and aspartate 106 each contribute to the Mg(2+) site. Residue glutamate 107 is part of the active site.

Belongs to the DNA polymerase type-Y family. Monomer. It depends on Mg(2+) as a cofactor.

It is found in the cytoplasm. It carries out the reaction DNA(n) + a 2'-deoxyribonucleoside 5'-triphosphate = DNA(n+1) + diphosphate. Functionally, poorly processive, error-prone DNA polymerase involved in untargeted mutagenesis. Copies undamaged DNA at stalled replication forks, which arise in vivo from mismatched or misaligned primer ends. These misaligned primers can be extended by PolIV. Exhibits no 3'-5' exonuclease (proofreading) activity. May be involved in translesional synthesis, in conjunction with the beta clamp from PolIII. This Clostridioides difficile (strain 630) (Peptoclostridium difficile) protein is DNA polymerase IV.